Reading from the N-terminus, the 294-residue chain is 3-methyl-2-oxobutanoate hydroxymethyltransferase 1 (294 aa).

A Mg(2+)-binding site is contributed by Asp55. Residues Asp55–Ser56 and Lys123 contribute to the 3-methyl-2-oxobutanoate site. Residue Glu192 is the Proton acceptor of the active site.

This sequence belongs to the PanB family. Homodecamer; pentamer of dimers. Requires Mg(2+) as cofactor.

The protein localises to the cytoplasm. The catalysed reaction is 3-methyl-2-oxobutanoate + (6R)-5,10-methylene-5,6,7,8-tetrahydrofolate + H2O = 2-dehydropantoate + (6S)-5,6,7,8-tetrahydrofolate. The protein operates within cofactor biosynthesis; (R)-pantothenate biosynthesis; (R)-pantoate from 3-methyl-2-oxobutanoate: step 1/2. Functionally, catalyzes the reversible reaction in which hydroxymethyl group from 5,10-methylenetetrahydrofolate is transferred onto alpha-ketoisovalerate to form ketopantoate. The polypeptide is 3-methyl-2-oxobutanoate hydroxymethyltransferase 1 (Methylibium petroleiphilum (strain ATCC BAA-1232 / LMG 22953 / PM1)).